Consider the following 341-residue polypeptide: S-adenosylmethionine:tRNA ribosyltransferase-isomerase (341 aa).

The protein belongs to the QueA family. As to quaternary structure, monomer.

It localises to the cytoplasm. The enzyme catalyses 7-aminomethyl-7-carbaguanosine(34) in tRNA + S-adenosyl-L-methionine = epoxyqueuosine(34) in tRNA + adenine + L-methionine + 2 H(+). It participates in tRNA modification; tRNA-queuosine biosynthesis. Functionally, transfers and isomerizes the ribose moiety from AdoMet to the 7-aminomethyl group of 7-deazaguanine (preQ1-tRNA) to give epoxyqueuosine (oQ-tRNA). In Chlorobium luteolum (strain DSM 273 / BCRC 81028 / 2530) (Pelodictyon luteolum), this protein is S-adenosylmethionine:tRNA ribosyltransferase-isomerase.